The chain runs to 360 residues: Mannose-1-phosphate guanylyltransferase catalytic subunit beta (360 aa).

The tract at residues 2-222 (KALILVGGYG…QGFWMDIGQP (221 aa)) is substrate-binding domain. D110 contacts GDP-alpha-D-mannose. D110 is a Mg(2+) binding site. K162 is an active-site residue. D218 contributes to the GDP-alpha-D-mannose binding site. D218 contacts Mg(2+). The segment at 245-360 (RAGPGFLGNV…DSVPEPRIIM (116 aa)) is hexapeptide repeat domain.

The protein belongs to the transferase hexapeptide repeat family. As to quaternary structure, component of the GMPPA-GMPPB mannose-1-phosphate guanylyltransferase complex composed of 4 gmppa subunits and 8 gmppb subunits; the complex is organized into three layers, a central layer made up of 2 gmppa dimers sandwiched between two layers each made up of 2 gmppb dimers. Catalytic activity of gmppb is reduced when part of the complex and binding of GDP-alpha-D-Mannose by gmppa induces allosteric feedback inhibition of gmppb. It depends on Mg(2+) as a cofactor.

The enzyme catalyses alpha-D-mannose 1-phosphate + GTP + H(+) = GDP-alpha-D-mannose + diphosphate. Its pathway is nucleotide-sugar biosynthesis; GDP-alpha-D-mannose biosynthesis; GDP-alpha-D-mannose from alpha-D-mannose 1-phosphate (GTP route): step 1/1. Enzyme activity is reduced by incorporation into the GMPPA-GMPPB mannose-1-phosphate guanylyltransferase complex. Allosterically inhibited, when part of the GMPPA-GMPPB complex, by GDP-alpha-D-mannose binding to GMPPA. Its function is as follows. Catalytic subunit of the GMPPA-GMPPB mannose-1-phosphate guanylyltransferase complex. Catalyzes the formation of GDP-mannose, an essential precursor of glycan moieties of glycoproteins and glycolipids. Can catalyze the reverse reaction in vitro. Together with GMPPA regulates GDP-alpha-D-mannose levels. The chain is Mannose-1-phosphate guanylyltransferase catalytic subunit beta (gmppb) from Danio rerio (Zebrafish).